The chain runs to 390 residues: 4-O-beta-D-mannosyl-D-glucose phosphorylase (390 aa).

Belongs to the glycosyl hydrolase 130 family.

It carries out the reaction 4-O-beta-D-mannopyranosyl-D-glucopyranose + phosphate = alpha-D-mannose 1-phosphate + D-glucose. In terms of biological role, converts 4-O-beta-D-mannopyranosyl-D-glucopyranose (Man-Glc) to mannose 1-phosphate (Man1P) and glucose. Involved in a mannan catabolic pathway which feeds into glycolysis. In Bacteroides fragilis (strain ATCC 25285 / DSM 2151 / CCUG 4856 / JCM 11019 / LMG 10263 / NCTC 9343 / Onslow / VPI 2553 / EN-2), this protein is 4-O-beta-D-mannosyl-D-glucose phosphorylase.